Here is a 361-residue protein sequence, read N- to C-terminus: sn-glycerol-3-phosphate import ATP-binding protein UgpC (361 aa).

An ABC transporter domain is found at 4-235; it reads LSLKGVRKSY…PATVFVAGFI (232 aa). 37–44 serves as a coordination point for ATP; sequence GPSGCGKS.

This sequence belongs to the ABC transporter superfamily. sn-glycerol-3-phosphate importer (TC 3.A.1.1.3) family. In terms of assembly, the complex is composed of two ATP-binding proteins (UgpC), two transmembrane proteins (UgpA and UgpE) and a solute-binding protein (UgpB).

It is found in the cell inner membrane. It carries out the reaction sn-glycerol 3-phosphate(out) + ATP + H2O = sn-glycerol 3-phosphate(in) + ADP + phosphate + H(+). Functionally, part of the ABC transporter complex UgpBAEC involved in sn-glycerol-3-phosphate (G3P) import. Responsible for energy coupling to the transport system. This Burkholderia cenocepacia (strain HI2424) protein is sn-glycerol-3-phosphate import ATP-binding protein UgpC.